The following is a 172-amino-acid chain: MHAGRKTAVLIGAALAPVIAVSLPAASASAHGYISNPPSRQAQCAAGTVSCGDITYEPQSVEGPKGLTSCSGGNSRFAELDDDSKGWAVTPVPRNATFSWKLTAQHSTSTWEYYVGGQRIALFDDGGAKPGAVVDHQVDFGGLDGRQKVLAVWNVADTDNAFYACIDVNVGG.

An N-terminal signal peptide occupies residues 1 to 30 (MHAGRKTAVLIGAALAPVIAVSLPAASASA). Cu cation contacts are provided by His31 and His106. The region spanning 31-168 (HGYISNPPSR…DNAFYACIDV (138 aa)) is the Chitin-binding type-4 domain.

Requires Cu(2+) as cofactor.

It localises to the secreted. It catalyses the reaction [(1-&gt;4)-N-acetyl-beta-D-glucosaminyl]n+m + reduced acceptor + O2 = [(1-&gt;4)-N-acetyl-beta-D-glucosaminyl]m-1-(1-&gt;4)-2-(acetylamino)-2-deoxy-D-glucono-1,5-lactone + [(1-&gt;4)-N-acetyl-beta-D-glucosaminyl]n + acceptor + H2O.. It functions in the pathway glycan degradation; chitin degradation. Involved in chitin degradation. Catalyzes the oxidative cleavage of glycosidic bonds in chitin via a copper-dependent mechanism, leading to oxidized chitooligomers with degrees of polymerization of 4-6. Is not active on cellulose. The polypeptide is Lytic chitin monooxygenase (Streptomyces ambofaciens (strain ATCC 23877 / 3486 / DSM 40053 / JCM 4204 / NBRC 12836 / NRRL B-2516)).